A 2176-amino-acid chain; its full sequence is Protein sidekick-2 (2176 aa).

Residues 1 to 24 (MFSSMWRLPLWTLLALHRIHSAGA) form the signal peptide. The Extracellular portion of the chain corresponds to 25-1936 (QDDVPPYFKT…ASPFYEEWWF (1912 aa)). 6 Ig-like C2-type domains span residues 30–112 (PYFK…TEVQ), 117–204 (GSFE…QPIT), 219–298 (PTII…SSVA), 312–402 (PQFV…LAVT), 406–495 (PNIT…ADLV), and 500–589 (TRIT…AHLR). C52 and C95 are oxidised to a cystine. N-linked (GlcNAc...) asparagine glycosylation is present at N197. 4 disulfides stabilise this stretch: C241-C288, C334-C384, C427-C479, and C521-C573. 13 consecutive Fibronectin type-III domains span residues 596 to 692 (APEH…LPEE), 697 to 793 (PPQN…TLQG), 798 to 897 (PPGN…THED), 901 to 995 (PVGH…VPPE), 999 to 1098 (APTN…TLQA), 1103 to 1201 (APAN…TRES), 1206 to 1303 (GPTN…TLDD), 1307 to 1401 (PPMG…TEKR), 1406 to 1503 (PPSK…TLQA), 1508 to 1625 (APTI…VGEA), 1630 to 1726 (APQN…TQQA), 1730 to 1825 (APGS…TGPG), and 1828 to 1930 (APGP…ASPF). N-linked (GlcNAc...) asparagine glycosylation occurs at N747. N-linked (GlcNAc...) asparagine glycosylation is found at N940 and N952. Residue N1106 is glycosylated (N-linked (GlcNAc...) asparagine). N1592 carries an N-linked (GlcNAc...) asparagine glycan. A disordered region spans residues 1712-1734 (DGPRSTPTRGQTQQAAPSAPGSV). A compositionally biased stretch (polar residues) spans 1716–1727 (STPTRGQTQQAA). A helical transmembrane segment spans residues 1937 to 1957 (LVVIALVGLIFILLLVFVLII). Residues 1958–2176 (RGQSKKYSKK…APIAGFSSFV (219 aa)) are Cytoplasmic-facing. Disordered regions lie at residues 2013-2032 (GLYT…YSDE), 2043-2070 (AESS…VDTN), and 2102-2176 (QAYS…SSFV). Composition is skewed to polar residues over residues 2044 to 2070 (ESSS…VDTN) and 2119 to 2129 (VPNSNSTQQGS). Residues 2170–2176 (AGFSSFV) carry the PDZ-binding motif.

Belongs to the sidekick family. Homodimer; mediates homophilic interactions to promote cell adhesion. Interacts (via PDZ-binding motif) with MAGI1, MAGI2, DLG2, DLG3 and DLG4. As to expression, expressed in retinal ganglion cells (RGCs) that form synapses in distinct inner plexiform layer (IPL) sublaminae. Specifically expressed in specific subsets of retinal ganglion cells (RGCs), named W3B-RGCs, that specifically respond when the timing of the movement of a small object differs from that of the background, but not when they coincide (at protein level). Also present in excitatory amacrine cell type called VG3-ACs, that provide strong and selective input W3B-RGCs (at protein level). Expressed at low levels in the glomeruli.

Its subcellular location is the cell membrane. It localises to the synapse. Functionally, adhesion molecule that promotes lamina-specific synaptic connections in the retina and is specifically required for the formation of neuronal circuits that detect motion. Acts by promoting formation of synapses between two specific retinal cell types: the retinal ganglion cells W3B-RGCs and the excitatory amacrine cells VG3-ACs. Formation of synapses between these two cells plays a key role in detection of motion. Promotes synaptic connectivity via homophilic interactions. This chain is Protein sidekick-2, found in Mus musculus (Mouse).